The sequence spans 228 residues: Aquaporin Z (228 aa).

Transmembrane regions (helical) follow at residues 1 to 21 and 23 to 43; these read MLNK…GGCG and AILA…ALAF. An NPA 1 motif is present at residues 63 to 65; the sequence is NPA. 3 helical membrane-spanning segments follow: residues 82 to 102, 129 to 149, and 154 to 174; these read IPYW…LYVI, MMAG…IILG, and LAPA…IHLV. The NPA 2 signature appears at 184 to 186; it reads NPA. A helical membrane pass occupies residues 205–225; it reads LFWVAPLVGAVIGAIIWKGLL.

The protein belongs to the MIP/aquaporin (TC 1.A.8) family. In terms of assembly, homotetramer.

The protein localises to the cell inner membrane. The enzyme catalyses H2O(in) = H2O(out). Functionally, channel that permits osmotically driven movement of water in both directions. It is involved in the osmoregulation and in the maintenance of cell turgor during volume expansion in rapidly growing cells. It mediates rapid entry or exit of water in response to abrupt changes in osmolarity. The protein is Aquaporin Z of Brucella abortus biovar 1 (strain 9-941).